We begin with the raw amino-acid sequence, 365 residues long: Formamidopyrimidine-DNA glycosylase (365 aa).

Proline 2 serves as the catalytic Schiff-base intermediate with DNA. Catalysis depends on glutamate 3, which acts as the Proton donor. Residue lysine 61 is the Proton donor; for beta-elimination activity of the active site. The interval 121-150 (RGRLAGHGDGMDGTSRTGSTLPGTGGTENS) is disordered. Residues 134 to 150 (TSRTGSTLPGTGGTENS) are compositionally biased toward polar residues. DNA is bound by residues histidine 186, arginine 205, and arginine 246. An FPG-type zinc finger spans residues 331-365 (RVYGRGGQPCRHCGTTLATAQVAGRTTVFCPQCQR). Residue arginine 355 is the Proton donor; for delta-elimination activity of the active site.

The protein belongs to the FPG family. As to quaternary structure, monomer. Zn(2+) is required as a cofactor.

The catalysed reaction is Hydrolysis of DNA containing ring-opened 7-methylguanine residues, releasing 2,6-diamino-4-hydroxy-5-(N-methyl)formamidopyrimidine.. It catalyses the reaction 2'-deoxyribonucleotide-(2'-deoxyribose 5'-phosphate)-2'-deoxyribonucleotide-DNA = a 3'-end 2'-deoxyribonucleotide-(2,3-dehydro-2,3-deoxyribose 5'-phosphate)-DNA + a 5'-end 5'-phospho-2'-deoxyribonucleoside-DNA + H(+). Its function is as follows. Involved in base excision repair of DNA damaged by oxidation or by mutagenic agents. Acts as a DNA glycosylase that recognizes and removes damaged bases. Has a preference for oxidized purines, such as 7,8-dihydro-8-oxoguanine (8-oxoG). Has AP (apurinic/apyrimidinic) lyase activity and introduces nicks in the DNA strand. Cleaves the DNA backbone by beta-delta elimination to generate a single-strand break at the site of the removed base with both 3'- and 5'-phosphates. The protein is Formamidopyrimidine-DNA glycosylase of Nitratidesulfovibrio vulgaris (strain ATCC 29579 / DSM 644 / CCUG 34227 / NCIMB 8303 / VKM B-1760 / Hildenborough) (Desulfovibrio vulgaris).